Reading from the N-terminus, the 259-residue chain is Type-2Aa cytolytic delta-endotoxin (259 aa).

Belongs to the cyt1/cyt2 endotoxin family. As to quaternary structure, homodimer (protoxin) and monomer (active toxin). Active after proteolytic processing.

Its function is as follows. Kills the larvae of dipteran insects by making pores in the epithelial cell membrane of the insect midgut. The polypeptide is Type-2Aa cytolytic delta-endotoxin (cyt2Aa1) (Bacillus thuringiensis subsp. kyushuensis).